The primary structure comprises 902 residues: U3 small nucleolar RNA-associated protein 21 homolog (902 aa).

14 WD repeats span residues 40–71 (DIEA…LLFV), 80–110 (TCLK…WDID), 119–154 (THLD…LHTT), 164–198 (TSLL…RVHE), 206–243 (GITS…MEFK), 249–284 (LSCS…QNVT), 289–332 (FGSL…RSRN), 339–373 (SFVK…QSTE), 399–438 (TALS…GQHV), 447–481 (VRSV…KRKS), 492–528 (VTAV…DSLD), 533–568 (ITHA…VREL), 570–611 (GHSN…DSIS), and 613–651 (PSVC…KHVS).

In terms of assembly, interacts with snoRNA U3. Interacts with MPP10. Component of the ribosomal small subunit (SSU) processome composed of at least 40 protein subunits and snoRNA U3.

The protein resides in the nucleus. Its subcellular location is the nucleolus. Functionally, involved in nucleolar processing of pre-18S ribosomal RNA and ribosome assembly. The polypeptide is U3 small nucleolar RNA-associated protein 21 homolog (Schizosaccharomyces pombe (strain 972 / ATCC 24843) (Fission yeast)).